Consider the following 586-residue polypeptide: Tetratricopeptide repeat protein 39B (586 aa).

TPR repeat units lie at residues 292 to 325 (SIIL…QQEW), 483 to 516 (CLVQ…EKRV), and 524 to 557 (PFTF…YKDY).

It belongs to the TTC39 family.

In terms of biological role, may be involved in lipid metabolism. The protein is Tetratricopeptide repeat protein 39B (ttc39b) of Xenopus laevis (African clawed frog).